Consider the following 657-residue polypeptide: Broad substrate specificity ATP-binding cassette transporter ABCG2 (657 aa).

Residues 1-25 (MSSSNDHVLVPMSQRNKNGLPGMSS) form a disordered region. Over 1-395 (MSSSNDHVLV…KNLLGNPQAS (395 aa)) the chain is Cytoplasmic. An ABC transporter domain is found at 48–285 (VKSGFLVRKT…FASAGYHCEP (238 aa)). ATP is bound by residues 79-86 (GPTGGGKS), 183-189 (RGISGGE), glutamate 210, and histidine 242. The 265-residue stretch at 389–653 (LGNPQASVAQ…TIAYLKLLFL (265 aa)) folds into the ABC transmembrane type-2 domain. The chain crosses the membrane as a helical span at residues 396 to 416 (VAQLIVTVILGLIIGALYFGL). The Extracellular segment spans residues 417 to 428 (KNDPTGMQNRAG). A helical membrane pass occupies residues 429–449 (VFFFLTTNQCFTSVSAVELFV). Topologically, residues 450 to 477 (VEKKLFIHEYISGYYRVSSYFFGKLVSD) are cytoplasmic. Residues 478 to 498 (LLPMRFLPSVIYTCILYFMLG) traverse the membrane as a helical segment. The Extracellular portion of the chain corresponds to 499 to 506 (LKRTVEAF). Residues 507–527 (FIMMFTLIMVAYTASSMALAI) form a helical membrane-spanning segment. The Cytoplasmic segment spans residues 528 to 535 (AAGQSVVS). The helical transmembrane segment at 536–556 (VATLLMTISFVFMMLFSGLLV) threads the bilayer. The Extracellular portion of the chain corresponds to 557–632 (NLRTIGPWLS…LSPWGLWRNH (76 aa)). A disulfide bridge connects residues cysteine 592 and cysteine 610. Asparagine 596 and asparagine 600 each carry an N-linked (GlcNAc...) asparagine glycan. The chain crosses the membrane as a helical span at residues 633–653 (VALACMIIIFLTIAYLKLLFL). The Cytoplasmic portion of the chain corresponds to 654-657 (KKYS).

Belongs to the ABC transporter superfamily. ABCG family. Eye pigment precursor importer (TC 3.A.1.204) subfamily. Homodimer; disulfide-linked. The minimal functional unit is a homodimer, but the major oligomeric form in plasma membrane is a homotetramer with possibility of higher order oligomerization up to homododecamers. Post-translationally, N-glycosylated in brain capillary, kidney and small intestine but not in heart. N-glycosylated. Glycosylation-deficient ABCG2 is normally expressed and functional. In terms of processing, phosphorylated. Phosphorylation may regulate the localization to the plasma membrane, the homooligomerization and therefore, the activity of the transporter. As to expression, highly expressed in brain capillary, kidney and small intestine. Lower expression in heart. Preferentially expressed (at protein level) on the luminal membrane of brain capillaries, in kidney and small intestine.

It is found in the cell membrane. It localises to the apical cell membrane. The protein resides in the mitochondrion membrane. The enzyme catalyses ATP + H2O + xenobioticSide 1 = ADP + phosphate + xenobioticSide 2.. It carries out the reaction urate(in) + ATP + H2O = urate(out) + ADP + phosphate + H(+). It catalyses the reaction indoxyl sulfate(in) + ATP + H2O = indoxyl sulfate(out) + ADP + phosphate + H(+). The catalysed reaction is sphing-4-enine 1-phosphate(in) + ATP + H2O = sphing-4-enine 1-phosphate(out) + ADP + phosphate + H(+). The enzyme catalyses estrone 3-sulfate(in) + ATP + H2O = estrone 3-sulfate(out) + ADP + phosphate + H(+). It carries out the reaction dehydroepiandrosterone 3-sulfate(in) + ATP + H2O = dehydroepiandrosterone 3-sulfate(out) + ADP + phosphate + H(+). It catalyses the reaction 4-methylumbelliferone sulfate(in) + ATP + H2O = 4-methylumbelliferone sulfate(out) + ADP + phosphate + H(+). The catalysed reaction is 5,7-dimethyl-2-methylamino-4-(3-pyridylmethyl)-1,3-benzothiazol-6-yl beta-D-glucuronate(in) + ATP + H2O = 5,7-dimethyl-2-methylamino-4-(3-pyridylmethyl)-1,3-benzothiazol-6-yl beta-D-glucuronate(out) + ADP + phosphate + H(+). The enzyme catalyses 4-methylumbelliferone beta-D-glucuronate(in) + ATP + H2O = 4-methylumbelliferone beta-D-glucuronate(out) + ADP + phosphate + H(+). It carries out the reaction 5,7-dimethyl-2-methylamino-4-(3-pyridylmethyl)-1,3-benzothiazol-6-yl sulfate(in) + ATP + H2O = 5,7-dimethyl-2-methylamino-4-(3-pyridylmethyl)-1,3-benzothiazol-6-yl sulfate(out) + ADP + phosphate + H(+). It catalyses the reaction 17beta-estradiol 17-O-(beta-D-glucuronate)(in) + ATP + H2O = 17beta-estradiol 17-O-(beta-D-glucuronate)(out) + ADP + phosphate + H(+). The catalysed reaction is methotrexate(in) + ATP + H2O = methotrexate(out) + ADP + phosphate + H(+). The enzyme catalyses riboflavin(in) + ATP + H2O = riboflavin(out) + ADP + phosphate + H(+). It carries out the reaction pheophorbide a(in) + ATP + H2O = pheophorbide a(out) + ADP + phosphate + H(+). It catalyses the reaction itaconate(in) + ATP + H2O = itaconate(out) + ADP + phosphate + H(+). Functionally, broad substrate specificity ATP-dependent transporter of the ATP-binding cassette (ABC) family that actively extrudes a wide variety of physiological compounds, dietary toxins and xenobiotics from cells. Involved in porphyrin homeostasis, mediating the export of protoporphyrin IX (PPIX) from both mitochondria to cytosol and cytosol to extracellular space, it also functions in the cellular export of heme. Also mediates the efflux of sphingosine-1-P from cells. Acts as a urate exporter functioning in both renal and extrarenal urate excretion. In kidney, it also functions as a physiological exporter of the uremic toxin indoxyl sulfate. Also involved in the excretion of steroids like estrone 3-sulfate/E1S, 3beta-sulfooxy-androst-5-en-17-one/DHEAS, and other sulfate conjugates. Mediates the secretion of the riboflavin and biotin vitamins into milk. Extrudes pheophorbide a, a phototoxic porphyrin catabolite of chlorophyll, reducing its bioavailability. Plays an important role in the exclusion of xenobiotics from the brain. It confers to cells a resistance to multiple drugs and other xenobiotics including mitoxantrone, pheophorbide, camptothecin, methotrexate, azidothymidine, and the anthracyclines daunorubicin and doxorubicin, through the control of their efflux. In placenta, it limits the penetration of drugs from the maternal plasma into the fetus. May play a role in early stem cell self-renewal by blocking differentiation. In inflammatory macrophages, exports itaconate from the cytosol to the extracellular compartment and limits the activation of TFEB-dependent lysosome biogenesis involved in antibacterial innate immune response. The protein is Broad substrate specificity ATP-binding cassette transporter ABCG2 (Abcg2) of Rattus norvegicus (Rat).